A 653-amino-acid polypeptide reads, in one-letter code: Exocyst complex component EXO70C1 (653 aa).

Basic and acidic residues-rich tracts occupy residues 1 to 34 (MEKS…DELH), 159 to 177 (SREE…DGSN), and 438 to 451 (NKPE…QQQR). 3 disordered regions span residues 1 to 50 (MEKS…HSLV), 159 to 190 (SREE…DSDR), and 432 to 456 (EANQ…DDEE).

This sequence belongs to the EXO70 family. In terms of assembly, interacts with ROH1A. Binds directly to B1L. Post-translationally, phosphorylated. As to expression, expressed in anthers, pollen and root trichoblast cells.

It localises to the cytoplasm. Functionally, required for global plant growth and for male transmission. Involved in the regulation of tip growth of pollen tube. This is Exocyst complex component EXO70C1 from Arabidopsis thaliana (Mouse-ear cress).